Consider the following 237-residue polypeptide: Phosphoribosylaminoimidazole-succinocarboxamide synthase (237 aa).

Belongs to the SAICAR synthetase family.

The enzyme catalyses 5-amino-1-(5-phospho-D-ribosyl)imidazole-4-carboxylate + L-aspartate + ATP = (2S)-2-[5-amino-1-(5-phospho-beta-D-ribosyl)imidazole-4-carboxamido]succinate + ADP + phosphate + 2 H(+). Its pathway is purine metabolism; IMP biosynthesis via de novo pathway; 5-amino-1-(5-phospho-D-ribosyl)imidazole-4-carboxamide from 5-amino-1-(5-phospho-D-ribosyl)imidazole-4-carboxylate: step 1/2. In Citrobacter koseri (strain ATCC BAA-895 / CDC 4225-83 / SGSC4696), this protein is Phosphoribosylaminoimidazole-succinocarboxamide synthase.